A 316-amino-acid chain; its full sequence is Olfactory receptor 4N4C (316 aa).

Topologically, residues 1–26 (MKIANNTVVTEFILLGLTQSQDIQLL) are cytoplasmic. A helical transmembrane segment spans residues 27–47 (VFVLILIFYLIILPGNFLIIF). The Extracellular portion of the chain corresponds to 48-56 (TIRSDPGLT). Residues 57 to 77 (APLYLFLGNLAFLDASYSFIV) form a helical membrane-spanning segment. The Cytoplasmic segment spans residues 78–99 (APRMLVDFLSEKKVISYRGCIT). An intrachain disulfide couples C97 to C179. The helical transmembrane segment at 100 to 120 (QLFFLHFLGGGEGLLLVVMAF) threads the bilayer. Residues 121–143 (DRYIAICRPLHCSTVMNPRACYA) lie on the Extracellular side of the membrane. The chain crosses the membrane as a helical span at residues 144-164 (MMLALWLGGFVHSIIQVVLIL). At 165–204 (RLPFCGPNQLDNFFCDVRQVIKLACTDMFVVELLMVFNSG) the chain is on the cytoplasmic side. The chain crosses the membrane as a helical span at residues 205-225 (LMTLLCFLGLLASYAVILCHV). Residues 226 to 243 (RRAASEGKNKAMSTCTTR) are Extracellular-facing. Residues 244–264 (VIIILLMFGPAIFIYICPFRA) traverse the membrane as a helical segment. Residues 265–268 (LPAD) are Cytoplasmic-facing. A helical transmembrane segment spans residues 269–289 (KMVSLFHTVIFPLMNPMIYTL). Over 290–316 (RNQEVKTSMKRLLSRHVVCQVDFIIRN) the chain is Extracellular.

Belongs to the G-protein coupled receptor 1 family.

Its subcellular location is the membrane. In terms of biological role, odorant receptor. This is Olfactory receptor 4N4C from Homo sapiens (Human).